The following is a 597-amino-acid chain: tRNA uridine 5-carboxymethylaminomethyl modification enzyme MnmG (597 aa).

10 to 15 lines the FAD pocket; sequence GGGHAG. 267–281 lines the NAD(+) pocket; sequence GPRYCPSIEDKVVRF.

This sequence belongs to the MnmG family. As to quaternary structure, homodimer. Heterotetramer of two MnmE and two MnmG subunits. It depends on FAD as a cofactor.

It is found in the cytoplasm. NAD-binding protein involved in the addition of a carboxymethylaminomethyl (cmnm) group at the wobble position (U34) of certain tRNAs, forming tRNA-cmnm(5)s(2)U34. This is tRNA uridine 5-carboxymethylaminomethyl modification enzyme MnmG from Thermus thermophilus (strain ATCC 27634 / DSM 579 / HB8).